The following is a 404-amino-acid chain: Phosphoglycerate kinase (404 aa).

Residues 26 to 28 (DFN), arginine 41, 64 to 67 (HLGR), arginine 124, and arginine 161 contribute to the substrate site. ATP is bound by residues lysine 212, glycine 301, glutamate 332, and 359 to 362 (GGDS).

It belongs to the phosphoglycerate kinase family. As to quaternary structure, monomer.

Its subcellular location is the cytoplasm. The enzyme catalyses (2R)-3-phosphoglycerate + ATP = (2R)-3-phospho-glyceroyl phosphate + ADP. It functions in the pathway carbohydrate degradation; glycolysis; pyruvate from D-glyceraldehyde 3-phosphate: step 2/5. In Mesomycoplasma hyopneumoniae (strain 232) (Mycoplasma hyopneumoniae), this protein is Phosphoglycerate kinase.